The chain runs to 428 residues: Serine--tRNA ligase (428 aa).

L-serine is bound at residue 231 to 233 (TAE). 262 to 264 (RSE) contacts ATP. Glu-285 contacts L-serine. 349 to 352 (EISS) is a binding site for ATP. Ser-385 contributes to the L-serine binding site.

Belongs to the class-II aminoacyl-tRNA synthetase family. Type-1 seryl-tRNA synthetase subfamily. In terms of assembly, homodimer. The tRNA molecule binds across the dimer.

The protein localises to the cytoplasm. It catalyses the reaction tRNA(Ser) + L-serine + ATP = L-seryl-tRNA(Ser) + AMP + diphosphate + H(+). The catalysed reaction is tRNA(Sec) + L-serine + ATP = L-seryl-tRNA(Sec) + AMP + diphosphate + H(+). The protein operates within aminoacyl-tRNA biosynthesis; selenocysteinyl-tRNA(Sec) biosynthesis; L-seryl-tRNA(Sec) from L-serine and tRNA(Sec): step 1/1. Functionally, catalyzes the attachment of serine to tRNA(Ser). Is also able to aminoacylate tRNA(Sec) with serine, to form the misacylated tRNA L-seryl-tRNA(Sec), which will be further converted into selenocysteinyl-tRNA(Sec). The polypeptide is Serine--tRNA ligase (Staphylococcus aureus (strain MW2)).